The chain runs to 346 residues: N-acetyl-gamma-glutamyl-phosphate reductase (346 aa).

Residue Cys-149 is part of the active site.

The protein belongs to the NAGSA dehydrogenase family. Type 1 subfamily.

The protein localises to the cytoplasm. It catalyses the reaction N-acetyl-L-glutamate 5-semialdehyde + phosphate + NADP(+) = N-acetyl-L-glutamyl 5-phosphate + NADPH + H(+). It functions in the pathway amino-acid biosynthesis; L-arginine biosynthesis; N(2)-acetyl-L-ornithine from L-glutamate: step 3/4. Functionally, catalyzes the NADPH-dependent reduction of N-acetyl-5-glutamyl phosphate to yield N-acetyl-L-glutamate 5-semialdehyde. This is N-acetyl-gamma-glutamyl-phosphate reductase from Oceanobacillus iheyensis (strain DSM 14371 / CIP 107618 / JCM 11309 / KCTC 3954 / HTE831).